The chain runs to 178 residues: Caveolin-1 (178 aa).

Ser2 is modified (N-acetylserine). Ser2 bears the Phosphoserine mark. The required for homooligomerization stretch occupies residues 2-94 (SGGKYVDAEG…WKASFTTFTV (93 aa)). Over 2–104 (SGGKYVDAEG…TKYWFYRLLS (103 aa)) the chain is Cytoplasmic. Position 5 is an N6-acetyllysine; alternate (Lys5). Lys5 participates in a covalent cross-link: Glycyl lysine isopeptide (Lys-Gly) (interchain with G-Cter in ubiquitin); alternate. The residue at position 6 (Tyr6) is a Phosphotyrosine. Tyr14 is subject to Phosphotyrosine; by ABL1. Tyr25 carries the phosphotyrosine modification. Glycyl lysine isopeptide (Lys-Gly) (interchain with G-Cter in ubiquitin) cross-links involve residues Lys26, Lys30, Lys39, Lys47, and Lys57. The interaction with CAVIN3 stretch occupies residues 82–94 (DGIWKASFTTFTV). The helical intramembrane region spans 105-125 (ALLGIPLALLWGIYFAILSFL). Residues 126 to 178 (HIWAVVPCIRSYLIEIQCISRVYSICIHTFCDPLFEAIGKVFSNIRATVQKEI) are Cytoplasmic-facing. Residues 131 to 142 (VPCIRSYLIEIQ) are interacts with SPRY1, SPRY2, SPRY3 and SPRY4. Residues Cys133, Cys143, and Cys156 are each lipidated (S-palmitoyl cysteine). The segment at 149 to 160 (SICIHTFCDPLF) is interacts with SPRY1, SPRY2, and SPRY4. An interacts with SPRY1, SPRY2, SPRY3 and SPRY4 region spans residues 167–178 (FSNIRATVQKEI).

It belongs to the caveolin family. Homooligomer. Interacts with GLIPR2. Interacts with NOSTRIN. Interacts with SNAP25 and STX1A. Interacts (via the N-terminus) with DPP4; the interaction is direct. Interacts with CTNNB1, CDH1 and JUP. Interacts with PACSIN2; this interaction induces membrane tubulation. Interacts with SLC7A9. Interacts with BMX and BTK. Interacts with TGFBR1. Interacts with CAVIN3 (via leucine-zipper domain) in a cholesterol-sensitive manner. Interacts with CAVIN1. Interacts with EHD2 in a cholesterol-dependent manner. Forms a ternary complex with UBXN6 and VCP; mediates CAV1 targeting to lysosomes for degradation. Interacts with ABCG1; this interaction regulates ABCG1-mediated cholesterol efflux. Interacts with NEU3; this interaction enhances NEU3 sialidase activity within caveola. Interacts (via C-terminus) with SPRY1, SPRY2 (via C-terminus), SPRY3, and SPRY4. Interacts with IGFBP5; this interaction allows trafficking of IGFBP5 from the plasma membrane to the nucleus. Phosphorylated at Tyr-14 by ABL1 in response to oxidative stress. In terms of processing, ubiquitinated. Undergo monoubiquitination and multi- and/or polyubiquitination. Monoubiquitination of N-terminal lysines promotes integration in a ternary complex with UBXN6 and VCP which promotes oligomeric CAV1 targeting to lysosomes for degradation. Ubiquitinated by ZNRF1; leading to degradation and modulation of the TLR4-mediated immune response.

Its subcellular location is the golgi apparatus membrane. The protein resides in the cell membrane. It localises to the membrane. The protein localises to the caveola. It is found in the membrane raft. In terms of biological role, may act as a scaffolding protein within caveolar membranes. Forms a stable heterooligomeric complex with CAV2 that targets to lipid rafts and drives caveolae formation. Mediates the recruitment of CAVIN proteins (CAVIN1/2/3/4) to the caveolae. Interacts directly with G-protein alpha subunits and can functionally regulate their activity. Involved in the costimulatory signal essential for T-cell receptor (TCR)-mediated T-cell activation. Its binding to DPP4 induces T-cell proliferation and NF-kappa-B activation in a T-cell receptor/CD3-dependent manner. Recruits CTNNB1 to caveolar membranes and may regulate CTNNB1-mediated signaling through the Wnt pathway. Negatively regulates TGFB1-mediated activation of SMAD2/3 by mediating the internalization of TGFBR1 from membrane rafts leading to its subsequent degradation. Binds 20(S)-hydroxycholesterol (20(S)-OHC). This is Caveolin-1 (CAV1) from Ornithorhynchus anatinus (Duckbill platypus).